The sequence spans 296 residues: Protoheme IX farnesyltransferase 2 (296 aa).

The next 9 helical transmembrane spans lie at 7-27 (LLVA…GGYF), 36-56 (PMLL…GCVL), 83-103 (LKAA…LLWW), 108-128 (LTTA…SLWF), 134-154 (YGTL…YCAV), 163-183 (ASLL…IAIF), 207-227 (IHIV…CLGG), 229-249 (AGYG…AIAL), and 265-285 (FAFS…DFQV).

It belongs to the UbiA prenyltransferase family. Protoheme IX farnesyltransferase subfamily.

It localises to the cell inner membrane. It catalyses the reaction heme b + (2E,6E)-farnesyl diphosphate + H2O = Fe(II)-heme o + diphosphate. It functions in the pathway porphyrin-containing compound metabolism; heme O biosynthesis; heme O from protoheme: step 1/1. Converts heme B (protoheme IX) to heme O by substitution of the vinyl group on carbon 2 of heme B porphyrin ring with a hydroxyethyl farnesyl side group. This is Protoheme IX farnesyltransferase 2 from Pseudomonas aeruginosa (strain UCBPP-PA14).